A 1198-amino-acid polypeptide reads, in one-letter code: MTPEGTGLQFVSPFAFEAMQKVDVVRLASLSDPELRLLLPCLVRMALCAPADQSQSWAQDKKLILRLLSGVEAVNSIVALLSVDFHALEQDASKEQQLRHKLGGGSGESILVSQLQHGLTLEFEHSDSPRRLRLVLSELLAIMNKVSECNGEFFFKSSELFESAVYLEEAADVLCILQAELPSLLPIVDVAEALLRVRNGAWFLCLLVANVPDSFNEVCRGLIKNGERQDEESLGGRRRTDALRFLCRMNPSQALKVRGMVVEECHLPGLGVALTLDHTKTEACEDGVSDLVCFVSGLLLGTNAKVRTWFGTFIRNGQQRKRETSGSVLWQMRRQLLLELMGILPTVRSTRIVEEADVEMEPTVSVYSGLKEEHVVKASALLRLYCALMGIAGLKPTEEEAEQLLQLMTSRPPATPAGVRFVSLSFCMLLAFSTLVSTPEQEQLMVLWLSWMIKEEAYFESTSGVSASFGEMLLLVAMYFHSNQLSAIIDLVCSTLGMKIVIKPSSLSRMKTIFTQEIFTEQVVTAHAVRVPVTSNLSANITGFLPIHCIYQLLRSRSFTKHKVSIKDWIYRQLCETSTPLHPQLLPLIDVYINSILTPASKSNPEATNQPVTEQEILNLFQEVIGGDSVRLTQRFSITAQLLVLYYILSYEEALLANTKTLASMQRKPKSYSSSLMDQIPIKFLIRQAQGLQQELGGLHSALLRLLATNYPHLCIVDDWICEEEITGTDALLRRMLLTSNAKTHSPKQLQEAFSAVPVSHTQVMQIMEHLTLLSASELIPYAEVLTSNMNQLLNSGVPRRILQTVNKLWMVLNTVMPRRLWVMTVNALQPSIKFIRQQKYTQNDLMIDPLIVLRCDRRVHRCPPLMDVTLHMLNGYLLASKAYLSAHLKETAEQDRPSPNNTVGLVGQTDAPEVTREELKNALLAAQDSAAVQILLEICLPTEEEKAKGANSDISLRNTQGVTTISTPSKETEEGEDNLLCNLREVQCLICCLLHQMYIADPNIAKLVHFQGYPCELLPLTVAGIPSMHICLDFIPELIAQPELEKQIFAIQLLSHLCIQYALPKSLSVARLAVNVMGTLLTVLTQAKRYSFFMPTLPSLVSFCRAFPPLYEDIMSLLIQIGQVCASDVATQTRDIDPIITRLQQIKEKPSGWSQICKDPSYKNGSRDTGSMDPDVQLCHCIESTIIEIINMSVSGI.

The helical transmembrane segment at F421–S437 threads the bilayer.

Belongs to the Integrator subunit 2 family. In terms of assembly, component of the Integrator complex, composed of core subunits INTS1, INTS2, INTS3, INTS4, INTS5, INTS6, INTS7, INTS8, INTS9/RC74, INTS10, INTS11/CPSF3L, INTS12, INTS13, INTS14 and INTS15. The core complex associates with protein phosphatase 2A subunits PPP2CA and PPP2R1A, to form the Integrator-PP2A (INTAC) complex.

It is found in the nucleus. The protein resides in the nucleus membrane. It localises to the cytoplasm. Component of the integrator complex, a multiprotein complex that terminates RNA polymerase II (Pol II) transcription in the promoter-proximal region of genes. The integrator complex provides a quality checkpoint during transcription elongation by driving premature transcription termination of transcripts that are unfavorably configured for transcriptional elongation: the complex terminates transcription by (1) catalyzing dephosphorylation of the C-terminal domain (CTD) of Pol II subunit POLR2A/RPB1 and SUPT5H/SPT5, (2) degrading the exiting nascent RNA transcript via endonuclease activity and (3) promoting the release of Pol II from bound DNA. The integrator complex is also involved in terminating the synthesis of non-coding Pol II transcripts, such as enhancer RNAs (eRNAs), small nuclear RNAs (snRNAs), telomerase RNAs and long non-coding RNAs (lncRNAs). Mediates recruitment of cytoplasmic dynein to the nuclear envelope, probably as component of the integrator complex. In Mus musculus (Mouse), this protein is Integrator complex subunit 2 (Ints2).